The chain runs to 644 residues: Threonine--tRNA ligase (644 aa).

One can recognise a TGS domain in the interval 1–61 (MVAITLPDGS…VADAKVEIVT (61 aa)). A catalytic region spans residues 242-533 (DHRKIGKALN…LIENYAGWMP (292 aa)). Zn(2+)-binding residues include C333, H384, and H510.

This sequence belongs to the class-II aminoacyl-tRNA synthetase family. In terms of assembly, homodimer. The cofactor is Zn(2+).

The protein localises to the cytoplasm. The catalysed reaction is tRNA(Thr) + L-threonine + ATP = L-threonyl-tRNA(Thr) + AMP + diphosphate + H(+). Its function is as follows. Catalyzes the attachment of threonine to tRNA(Thr) in a two-step reaction: L-threonine is first activated by ATP to form Thr-AMP and then transferred to the acceptor end of tRNA(Thr). Also edits incorrectly charged L-seryl-tRNA(Thr). In Psychrobacter arcticus (strain DSM 17307 / VKM B-2377 / 273-4), this protein is Threonine--tRNA ligase.